The sequence spans 184 residues: ATP synthase subunit b 1 (184 aa).

Residues Asn36–Val55 traverse the membrane as a helical segment.

Belongs to the ATPase B chain family. In terms of assembly, F-type ATPases have 2 components, F(1) - the catalytic core - and F(0) - the membrane proton channel. F(1) has five subunits: alpha(3), beta(3), gamma(1), delta(1), epsilon(1). F(0) has four main subunits: a(1), b(1), b'(1) and c(10-14). The alpha and beta chains form an alternating ring which encloses part of the gamma chain. F(1) is attached to F(0) by a central stalk formed by the gamma and epsilon chains, while a peripheral stalk is formed by the delta, b and b' chains.

The protein localises to the cellular thylakoid membrane. In terms of biological role, f(1)F(0) ATP synthase produces ATP from ADP in the presence of a proton or sodium gradient. F-type ATPases consist of two structural domains, F(1) containing the extramembraneous catalytic core and F(0) containing the membrane proton channel, linked together by a central stalk and a peripheral stalk. During catalysis, ATP synthesis in the catalytic domain of F(1) is coupled via a rotary mechanism of the central stalk subunits to proton translocation. Its function is as follows. Component of the F(0) channel, it forms part of the peripheral stalk, linking F(1) to F(0). This Crocosphaera subtropica (strain ATCC 51142 / BH68) (Cyanothece sp. (strain ATCC 51142)) protein is ATP synthase subunit b 1.